We begin with the raw amino-acid sequence, 95 residues long: MANHPSAKKMIKVIKKRTMVNRMRKSRAHNYVKKFLLALAAGNKELMVETFKKAESNLHKCVNKKIIHRNTAARKISRMALKLKTFDLQQQAKAL.

This sequence belongs to the bacterial ribosomal protein bS20 family.

Its function is as follows. Binds directly to 16S ribosomal RNA. In Ehrlichia canis (strain Jake), this protein is Small ribosomal subunit protein bS20.